Here is a 306-residue protein sequence, read N- to C-terminus: Serine/threonine-protein kinase KIN28 (306 aa).

Residues 7-290 enclose the Protein kinase domain; it reads YTKEKKVGEG…AVQCLESDYF (284 aa). ATP contacts are provided by residues 13 to 21 and Lys-36; that span reads VGEGTYAVV. Residue Asp-129 is the Proton acceptor of the active site. Phosphothreonine; by CAK is present on Thr-162.

The protein belongs to the protein kinase superfamily. CMGC Ser/Thr protein kinase family. CDC2/CDKX subfamily. CCL1 and KIN28 form the TFIIK complex, a component of the TFIIH holo complex. Component of a complex consisting of KIN28, CCL1 and TFB3. Interacts with TFB3. Also interacts with HNT1 and HOG1. In terms of processing, phosphorylation of Thr-162 regulates the affinity of interaction between CCL1, KIN28 and TFB3. Thr-162 phosphorylation does not vary through the cell cycle and is necessary for full kinase activity.

The protein resides in the nucleus. The enzyme catalyses [DNA-directed RNA polymerase] + ATP = phospho-[DNA-directed RNA polymerase] + ADP + H(+). Catalytic component of the TFIIK complex (KIN28-CCL1 dimer) which is the protein kinase component of transcription factor IIH (TFIIH) and phosphorylates the C-terminal domain of RNA polymerase II during transition from transcription to elongation after preinitiation complex (PIC) formation, thereby positively regulating transcription. TFIIH (or factor B) is essential for both basal and activated transcription, and is involved in nucleotide excision repair (NER) of damaged DNA. TFIIH has DNA-dependent ATPase activity and is essential for polymerase II transcription in vitro. Essential for cell proliferation. The protein is Serine/threonine-protein kinase KIN28 (KIN28) of Saccharomyces cerevisiae (strain ATCC 204508 / S288c) (Baker's yeast).